A 967-amino-acid chain; its full sequence is Regulator of G-protein signaling 3 (967 aa).

Residues 18–95 form the PDZ domain; that stretch reads QITIRRGKDG…EIILLVWRVV (78 aa). The segment at 115–135 is disordered; sequence THDLLSPPNKREKNCTHGAPT. Arg167 bears the Omega-N-methylarginine mark. A disordered region spans residues 389-705; the sequence is QLAATPTERK…EGGLSLRVQN (317 aa). Polar residues-rich tracts occupy residues 476–486, 512–549, and 577–597; these read LPSSKNPSPSQ, SPSS…TEVP, and SSAS…QGSL. Residues 650–676 show a composition bias toward acidic residues; the sequence is GEDEDAEEGEEGEEGEEDEEDDTNDDN. A compositionally biased stretch (basic and acidic residues) spans 677–687; it reads YGDRNEAKRSS. Phosphoserine is present on residues Ser713, Ser716, Ser748, and Ser777. The interval 807 to 830 is disordered; the sequence is FRRRNESPGAQPAGKADKTTKSFK. Basic and acidic residues predominate over residues 821–830; that stretch reads KADKTTKSFK. An RGS domain is found at 842–967; the sequence is SLEKLLLHKY…INQKKMSPPL (126 aa).

In terms of assembly, binds EFNB1 and EFNB2. Binds the GNB1-GNG2 heterodimer. Binds ESR1. Phosphorylated by cyclic GMP-dependent protein kinase. Post-translationally, ISGylated. In terms of tissue distribution, detected in kidney, uterus, ovary, heart, brain, spleen, lung and testis.

It is found in the cytoplasm. It localises to the membrane. The protein resides in the nucleus. Functionally, down-regulates signaling from heterotrimeric G-proteins by increasing the GTPase activity of the alpha subunits, thereby driving them into their inactive GDP-bound form. Down-regulates G-protein-mediated release of inositol phosphates and activation of MAP kinases. This Rattus norvegicus (Rat) protein is Regulator of G-protein signaling 3 (Rgs3).